The chain runs to 377 residues: Queuine tRNA-ribosyltransferase (377 aa).

Residue aspartate 89 is the Proton acceptor of the active site. Substrate-binding positions include 89-93 (DSGGF), aspartate 143, glutamine 187, and glycine 214. Residues 245-251 (GVGKPED) are RNA binding. Aspartate 264 (nucleophile) is an active-site residue. The segment at 269 to 273 (TRNAR) is RNA binding; important for wobble base 34 recognition. Residues cysteine 302, cysteine 304, cysteine 307, and histidine 333 each coordinate Zn(2+).

Belongs to the queuine tRNA-ribosyltransferase family. Homodimer. Within each dimer, one monomer is responsible for RNA recognition and catalysis, while the other monomer binds to the replacement base PreQ1. Zn(2+) is required as a cofactor.

The catalysed reaction is 7-aminomethyl-7-carbaguanine + guanosine(34) in tRNA = 7-aminomethyl-7-carbaguanosine(34) in tRNA + guanine. The protein operates within tRNA modification; tRNA-queuosine biosynthesis. Functionally, catalyzes the base-exchange of a guanine (G) residue with the queuine precursor 7-aminomethyl-7-deazaguanine (PreQ1) at position 34 (anticodon wobble position) in tRNAs with GU(N) anticodons (tRNA-Asp, -Asn, -His and -Tyr). Catalysis occurs through a double-displacement mechanism. The nucleophile active site attacks the C1' of nucleotide 34 to detach the guanine base from the RNA, forming a covalent enzyme-RNA intermediate. The proton acceptor active site deprotonates the incoming PreQ1, allowing a nucleophilic attack on the C1' of the ribose to form the product. After dissociation, two additional enzymatic reactions on the tRNA convert PreQ1 to queuine (Q), resulting in the hypermodified nucleoside queuosine (7-(((4,5-cis-dihydroxy-2-cyclopenten-1-yl)amino)methyl)-7-deazaguanosine). The sequence is that of Queuine tRNA-ribosyltransferase from Shewanella sediminis (strain HAW-EB3).